The primary structure comprises 321 residues: Lipoyl synthase (321 aa).

7 residues coordinate [4Fe-4S] cluster: cysteine 68, cysteine 73, cysteine 79, cysteine 94, cysteine 98, cysteine 101, and serine 308. One can recognise a Radical SAM core domain in the interval 80–297 (FNHGTATFMI…KAEALAMGFT (218 aa)).

Belongs to the radical SAM superfamily. Lipoyl synthase family. Requires [4Fe-4S] cluster as cofactor.

The protein localises to the cytoplasm. The catalysed reaction is [[Fe-S] cluster scaffold protein carrying a second [4Fe-4S](2+) cluster] + N(6)-octanoyl-L-lysyl-[protein] + 2 oxidized [2Fe-2S]-[ferredoxin] + 2 S-adenosyl-L-methionine + 4 H(+) = [[Fe-S] cluster scaffold protein] + N(6)-[(R)-dihydrolipoyl]-L-lysyl-[protein] + 4 Fe(3+) + 2 hydrogen sulfide + 2 5'-deoxyadenosine + 2 L-methionine + 2 reduced [2Fe-2S]-[ferredoxin]. It functions in the pathway protein modification; protein lipoylation via endogenous pathway; protein N(6)-(lipoyl)lysine from octanoyl-[acyl-carrier-protein]: step 2/2. Its function is as follows. Catalyzes the radical-mediated insertion of two sulfur atoms into the C-6 and C-8 positions of the octanoyl moiety bound to the lipoyl domains of lipoate-dependent enzymes, thereby converting the octanoylated domains into lipoylated derivatives. This Edwardsiella ictaluri (strain 93-146) protein is Lipoyl synthase.